We begin with the raw amino-acid sequence, 325 residues long: Diadenosine 5',5'''-P1,P4-tetraphosphate phosphorylase 2 (325 aa).

Residues Lys53, 92-93 (NK), Asn148, and 154-157 (GSSQ) contribute to the substrate site. The active-site Nucleophile is His161. Residues Gln163, 277-279 (NST), Met284, and Lys288 contribute to the substrate site.

The protein belongs to the ATP adenylyltransferase family. As to quaternary structure, monomer. Requires a divalent metal cation as cofactor.

It localises to the cytoplasm. Its subcellular location is the nucleus. It catalyses the reaction ADP + ATP + H(+) = P(1),P(4)-bis(5'-adenosyl) tetraphosphate + phosphate. It carries out the reaction sulfate + ADP + H(+) = adenosine 5'-phosphosulfate + phosphate. In terms of biological role, ap4A phosphorylase catalyzes the phosphorolytic degradation of bis(5'-adenosyl) tetraphosphate (Ap4A) into ADP and ATP. Can also use other Np4N' nucleotides (where N and N' stand for A,C,G or U) as substrates, but prefers A-containing substrates. Cannot catalyze the reverse reaction. Additionally, this enzyme can also catalyze the phosphorolytic degradation of adenosine 5'-phosphosulfate (AMPS) into ADP and sulfate, the reversible exchange reaction between inorganic phosphate and the beta-phosphate of a nucleoside diphosphate (NDP), and the synthesis of Ap4A from AMPS plus ATP. This Saccharomyces cerevisiae (strain ATCC 204508 / S288c) (Baker's yeast) protein is Diadenosine 5',5'''-P1,P4-tetraphosphate phosphorylase 2.